The primary structure comprises 120 residues: Nitrogen regulatory protein GlnK3 (120 aa).

Residues threonine 40 and 48–50 (GEQ) contribute to the ADP site. ATP contacts are provided by residues threonine 40 and 48 to 50 (GEQ). 2-oxoglutarate is bound by residues 48 to 52 (GEQKG) and lysine 69. ADP is bound by residues valine 75 and 98–101 (GDGR). Residues valine 75 and 98 to 101 (GDGR) each bind ATP. 2-oxoglutarate is bound at residue glycine 98.

This sequence belongs to the P(II) protein family. In terms of assembly, homotrimer. Interacts and forms a complex with Amt3.

It is found in the cytoplasm. Activity is influenced by intracellular pools of the effector molecules ATP, ADP and 2-oxoglutarate. It senses the cellular nitrogen status through 2-oxoglutarate, and the energy level of the cell by binding both ATP and ADP with different affinities. ATP and 2-oxoglutarate prohibit binding to Amt3. ADP promotes the complex formation. Its function is as follows. Involved in the regulation of nitrogen metabolism. Regulates the activity of its targets by protein-protein interaction in response to the nitrogen status of the cell. Regulates the activity of the ammonia channel Amt3 via direct interaction. In Archaeoglobus fulgidus (strain ATCC 49558 / DSM 4304 / JCM 9628 / NBRC 100126 / VC-16), this protein is Nitrogen regulatory protein GlnK3.